The chain runs to 253 residues: Ubiquinone biosynthesis O-methyltransferase (253 aa).

S-adenosyl-L-methionine is bound by residues arginine 41, glycine 72, aspartate 93, and methionine 136.

This sequence belongs to the methyltransferase superfamily. UbiG/COQ3 family.

The enzyme catalyses a 3-demethylubiquinol + S-adenosyl-L-methionine = a ubiquinol + S-adenosyl-L-homocysteine + H(+). It carries out the reaction a 3-(all-trans-polyprenyl)benzene-1,2-diol + S-adenosyl-L-methionine = a 2-methoxy-6-(all-trans-polyprenyl)phenol + S-adenosyl-L-homocysteine + H(+). The protein operates within cofactor biosynthesis; ubiquinone biosynthesis. In terms of biological role, O-methyltransferase that catalyzes the 2 O-methylation steps in the ubiquinone biosynthetic pathway. This Chelativorans sp. (strain BNC1) protein is Ubiquinone biosynthesis O-methyltransferase.